A 411-amino-acid polypeptide reads, in one-letter code: Na(+)-translocating NADH-quinone reductase subunit B (411 aa).

Transmembrane regions (helical) follow at residues 56–76, 121–141, and 161–181; these read IMIT…YNAG, FLPI…LFAV, and ILPA…GVVI. The residue at position 228 (T228) is an FMN phosphoryl threonine. 5 helical membrane passes run 254-274, 284-304, 309-329, 345-365, and 368-388; these read FIPG…AAVL, IMLG…AIGS, MFGM…GMVF, LLFG…NPAF, and GIML…HFFV.

It belongs to the NqrB/RnfD family. As to quaternary structure, composed of six subunits; NqrA, NqrB, NqrC, NqrD, NqrE and NqrF. The cofactor is FMN.

The protein resides in the cell inner membrane. It carries out the reaction a ubiquinone + n Na(+)(in) + NADH + H(+) = a ubiquinol + n Na(+)(out) + NAD(+). In terms of biological role, NQR complex catalyzes the reduction of ubiquinone-1 to ubiquinol by two successive reactions, coupled with the transport of Na(+) ions from the cytoplasm to the periplasm. NqrA to NqrE are probably involved in the second step, the conversion of ubisemiquinone to ubiquinol. The polypeptide is Na(+)-translocating NADH-quinone reductase subunit B (Chromohalobacter salexigens (strain ATCC BAA-138 / DSM 3043 / CIP 106854 / NCIMB 13768 / 1H11)).